We begin with the raw amino-acid sequence, 444 residues long: Serine--tRNA ligase (444 aa).

Thr248–Glu250 is a binding site for L-serine. Residue Arg279–Glu281 coordinates ATP. Position 302 (Glu302) interacts with L-serine. Position 366-369 (Glu366–Ser369) interacts with ATP. An L-serine-binding site is contributed by Ser401.

It belongs to the class-II aminoacyl-tRNA synthetase family. Type-1 seryl-tRNA synthetase subfamily. As to quaternary structure, homodimer. The tRNA molecule binds across the dimer.

The protein resides in the cytoplasm. The enzyme catalyses tRNA(Ser) + L-serine + ATP = L-seryl-tRNA(Ser) + AMP + diphosphate + H(+). It catalyses the reaction tRNA(Sec) + L-serine + ATP = L-seryl-tRNA(Sec) + AMP + diphosphate + H(+). It functions in the pathway aminoacyl-tRNA biosynthesis; selenocysteinyl-tRNA(Sec) biosynthesis; L-seryl-tRNA(Sec) from L-serine and tRNA(Sec): step 1/1. Functionally, catalyzes the attachment of serine to tRNA(Ser). Is also able to aminoacylate tRNA(Sec) with serine, to form the misacylated tRNA L-seryl-tRNA(Sec), which will be further converted into selenocysteinyl-tRNA(Sec). The sequence is that of Serine--tRNA ligase from Polaromonas naphthalenivorans (strain CJ2).